A 953-amino-acid polypeptide reads, in one-letter code: Coiled-coil domain-containing protein 14 (953 aa).

The span at 1–21 (MKRGIRRDPFRKRKLGGRAKK) shows a compositional bias: basic residues. Disordered stretches follow at residues 1 to 22 (MKRG…AKKV) and 52 to 72 (SGAR…AKLT). At serine 124 the chain carries Phosphoserine. Disordered regions lie at residues 126 to 189 (SETA…TSDL) and 268 to 287 (PPCP…SQFA). Over residues 145 to 154 (YGSKKKRHEK) the composition is skewed to basic residues. Positions 169 to 187 (DNKKQIPNEASARSERDTS) are enriched in basic and acidic residues. The span at 277–287 (EVQTDGNSQFA) shows a compositional bias: polar residues. Coiled coils occupy residues 383–413 (LATN…RDTK) and 483–618 (AMQP…AEKE). 3 positions are modified to phosphoserine: serine 670, serine 754, and serine 798.

In terms of assembly, interacts with CEP63.

It localises to the cytoplasm. The protein resides in the cytoskeleton. It is found in the microtubule organizing center. The protein localises to the centrosome. Its subcellular location is the centriolar satellite. Functionally, negatively regulates centriole duplication. Negatively regulates CEP63 and CDK2 centrosomal localization. This Homo sapiens (Human) protein is Coiled-coil domain-containing protein 14 (CCDC14).